Here is a 540-residue protein sequence, read N- to C-terminus: UDP-N-acetylmuramyl-tripeptide synthetase (540 aa).

Ser33 provides a ligand contact to UDP-N-acetyl-alpha-D-muramoyl-L-alanyl-D-glutamate. 114–120 contacts ATP; that stretch reads GTEGKSS. UDP-N-acetyl-alpha-D-muramoyl-L-alanyl-D-glutamate-binding positions include 158 to 159, Ser185, and Arg195; that span reads TT. Lys227 bears the N6-carboxylysine mark.

It belongs to the MurCDEF family. MurE subfamily. Post-translationally, carboxylation is probably crucial for Mg(2+) binding and, consequently, for the gamma-phosphate positioning of ATP.

The protein localises to the cytoplasm. The protein operates within cell wall biogenesis; peptidoglycan biosynthesis. Its function is as follows. Catalyzes the addition of an amino acid to the nucleotide precursor UDP-N-acetylmuramoyl-L-alanyl-D-glutamate (UMAG) in the biosynthesis of bacterial cell-wall peptidoglycan. The chain is UDP-N-acetylmuramyl-tripeptide synthetase from Treponema pallidum (strain Nichols).